Here is a 505-residue protein sequence, read N- to C-terminus: Trans-cinnamate 4-monooxygenase (505 aa).

Residues 3-23 (LLLLEKTLLGLFIAAITAIAI) traverse the membrane as a helical segment. (E)-cinnamate-binding positions include 213-218 (RSRLAQ) and A306. C447 lines the heme pocket.

The protein belongs to the cytochrome P450 family. Requires heme as cofactor.

The protein resides in the membrane. It catalyses the reaction (E)-cinnamate + reduced [NADPH--hemoprotein reductase] + O2 = (E)-4-coumarate + oxidized [NADPH--hemoprotein reductase] + H2O + H(+). It participates in phenylpropanoid metabolism; trans-4-coumarate biosynthesis; trans-4-coumarate from trans-cinnamate: step 1/1. Functionally, catalyzes the first oxidative step of the phenylpropanoid pathway in higher plants by transforming trans-cinnamate into p-coumarate. The compounds formed by this pathway are essential components for lignification, pollination, and defense against ultraviolet light, predators and pathogens. The chain is Trans-cinnamate 4-monooxygenase (CYP73A14) from Glycyrrhiza echinata (Licorice).